The primary structure comprises 150 residues: Large ribosomal subunit protein eL19 (150 aa).

A disordered region spans residues 56–90 (RGISSGRLKERKHKRRSKGEGRKHGSRKGKSGART).

This sequence belongs to the eukaryotic ribosomal protein eL19 family. As to quaternary structure, part of the 50S ribosomal subunit.

In terms of biological role, binds to the 23S rRNA. This Sulfolobus acidocaldarius (strain ATCC 33909 / DSM 639 / JCM 8929 / NBRC 15157 / NCIMB 11770) protein is Large ribosomal subunit protein eL19.